The following is a 280-amino-acid chain: 2-dehydro-3-deoxyphosphooctonate aldolase (280 aa).

The protein belongs to the KdsA family.

The protein localises to the cytoplasm. The enzyme catalyses D-arabinose 5-phosphate + phosphoenolpyruvate + H2O = 3-deoxy-alpha-D-manno-2-octulosonate-8-phosphate + phosphate. The protein operates within carbohydrate biosynthesis; 3-deoxy-D-manno-octulosonate biosynthesis; 3-deoxy-D-manno-octulosonate from D-ribulose 5-phosphate: step 2/3. Its pathway is bacterial outer membrane biogenesis; lipopolysaccharide biosynthesis. The chain is 2-dehydro-3-deoxyphosphooctonate aldolase from Neisseria meningitidis serogroup B (strain ATCC BAA-335 / MC58).